A 367-amino-acid polypeptide reads, in one-letter code: Chorismate synthase (367 aa).

The NADP(+) site is built by Arg-48 and Arg-54. Residues 125-127, 238-239, Gly-278, 293-297, and Arg-319 each bind FMN; these read RSS, NA, and KPTSS.

Belongs to the chorismate synthase family. In terms of assembly, homotetramer. It depends on FMNH2 as a cofactor.

It carries out the reaction 5-O-(1-carboxyvinyl)-3-phosphoshikimate = chorismate + phosphate. Its pathway is metabolic intermediate biosynthesis; chorismate biosynthesis; chorismate from D-erythrose 4-phosphate and phosphoenolpyruvate: step 7/7. Functionally, catalyzes the anti-1,4-elimination of the C-3 phosphate and the C-6 proR hydrogen from 5-enolpyruvylshikimate-3-phosphate (EPSP) to yield chorismate, which is the branch point compound that serves as the starting substrate for the three terminal pathways of aromatic amino acid biosynthesis. This reaction introduces a second double bond into the aromatic ring system. This is Chorismate synthase from Stenotrophomonas maltophilia (strain R551-3).